The following is a 445-amino-acid chain: Dolichyl-diphosphooligosaccharide--protein glycosyltransferase 48 kDa subunit (445 aa).

The first 32 residues, 1–32, serve as a signal peptide directing secretion; that stretch reads MRRRRKMEAGAAARAWSLLWLLLPLLGPVCAS. The Lumenal segment spans residues 33–415; sequence GPRTLVLLDN…QYERFIPSAY (383 aa). The helical transmembrane segment at 416–436 threads the bilayer; sequence PYYASAFSMMLGLFIFSTVFL. Residues 437 to 445 lie on the Cytoplasmic side of the membrane; sequence HMKEKEKSD.

Belongs to the DDOST 48 kDa subunit family. In terms of assembly, component of the oligosaccharyltransferase (OST) complex. OST exists in two different complex forms which contain common core subunits RPN1, RPN2, OST48, OST4, DAD1 and TMEM258, either STT3A or STT3B as catalytic subunits, and form-specific accessory subunits. STT3A complex assembly occurs through the formation of 3 subcomplexes. Subcomplex 1 contains RPN1 and TMEM258, subcomplex 2 contains the STT3A-specific subunits STT3A, DC2/OSTC, and KCP2 as well as the core subunit OST4, and subcomplex 3 contains RPN2, DAD1, and OST48. The STT3A complex can form stable complexes with the Sec61 complex or with both the Sec61 and TRAP complexes. Interacts with SMIM22.

It is found in the endoplasmic reticulum. Its subcellular location is the endoplasmic reticulum membrane. It participates in protein modification; protein glycosylation. In terms of biological role, subunit of the oligosaccharyl transferase (OST) complex that catalyzes the initial transfer of a defined glycan (Glc(3)Man(9)GlcNAc(2) in eukaryotes) from the lipid carrier dolichol-pyrophosphate to an asparagine residue within an Asn-X-Ser/Thr consensus motif in nascent polypeptide chains, the first step in protein N-glycosylation. N-glycosylation occurs cotranslationally and the complex associates with the Sec61 complex at the channel-forming translocon complex that mediates protein translocation across the endoplasmic reticulum (ER). All subunits are required for a maximal enzyme activity. Required for the assembly of both SST3A- and SS3B-containing OST complexes. This Canis lupus familiaris (Dog) protein is Dolichyl-diphosphooligosaccharide--protein glycosyltransferase 48 kDa subunit.